We begin with the raw amino-acid sequence, 428 residues long: Kynureninase (428 aa).

Pyridoxal 5'-phosphate contacts are provided by residues threonine 104, threonine 105, 132–135 (FPSD), aspartate 213, histidine 216, and tyrosine 238. Lysine 239 is modified (N6-(pyridoxal phosphate)lysine). Residues tryptophan 267 and threonine 295 each coordinate pyridoxal 5'-phosphate.

Belongs to the kynureninase family. In terms of assembly, homodimer. Pyridoxal 5'-phosphate serves as cofactor.

It catalyses the reaction L-kynurenine + H2O = anthranilate + L-alanine + H(+). The catalysed reaction is 3-hydroxy-L-kynurenine + H2O = 3-hydroxyanthranilate + L-alanine + H(+). It functions in the pathway amino-acid degradation; L-kynurenine degradation; L-alanine and anthranilate from L-kynurenine: step 1/1. It participates in cofactor biosynthesis; NAD(+) biosynthesis; quinolinate from L-kynurenine: step 2/3. Catalyzes the cleavage of L-kynurenine (L-Kyn) and L-3-hydroxykynurenine (L-3OHKyn) into anthranilic acid (AA) and 3-hydroxyanthranilic acid (3-OHAA), respectively. This is Kynureninase from Bacillus cereus (strain ATCC 10987 / NRS 248).